The chain runs to 354 residues: Uroporphyrinogen decarboxylase (354 aa).

Substrate-binding positions include 27–31 (RQAGR), Phe46, Asp77, Tyr154, Thr209, and His327.

It belongs to the uroporphyrinogen decarboxylase family. In terms of assembly, homodimer.

The protein localises to the cytoplasm. It catalyses the reaction uroporphyrinogen III + 4 H(+) = coproporphyrinogen III + 4 CO2. It functions in the pathway porphyrin-containing compound metabolism; protoporphyrin-IX biosynthesis; coproporphyrinogen-III from 5-aminolevulinate: step 4/4. Its function is as follows. Catalyzes the decarboxylation of four acetate groups of uroporphyrinogen-III to yield coproporphyrinogen-III. This chain is Uroporphyrinogen decarboxylase, found in Salmonella typhi.